A 379-amino-acid chain; its full sequence is MNKPRFNGTPVASLDSLSAMLGIERKRLDWIVKSVSMSYKQFKVETGKNKKERQIFEPKRSLKGIQKKINKEIFEKIDYPHYLHGALSGRDYISNAAVHTRKRTVICLDITNFYPSISKKDVCSIFKNLMRFSPDVSLCLTELVTLNNKVPQGGCCSSYIANLLFFNSEYNLYNRLKSMGLSYSRLLDDITISSDKDLSSEEKTKVIKLVHGMVNQYRLSINESKTTIEHSKDSSSKLSVTGLWVKHGVPKLTKENRRYIRYLVYICKKQGAYERHTKEYHDLWNRCSGKVAQMSRLGHVQAVELRAILSEIMPVYDDYKISKLKLMAKHYLNKFTPPLTDDQIRKIDRMLYDFDIVGRTNKNLAKLYRRKLVALLPDR.

The region spanning 1 to 245 is the Reverse transcriptase domain; the sequence is MNKPRFNGTP…SKLSVTGLWV (245 aa). Mg(2+)-binding residues include D109, D188, and D189.

The protein belongs to the bacterial reverse transcriptase family.

It catalyses the reaction DNA(n) + a 2'-deoxyribonucleoside 5'-triphosphate = DNA(n+1) + diphosphate. Reverse transcriptase (RT) component of antiviral defense system retron Se72, composed of a non-coding RNA (ncRNA), this reverse transcriptase (RT) and the following cold shock-like protein. Expression of retron Se72 confers protection against bacteriophage lambda. At multiplicity of infection (MOI) of 0.02 cultures slow growth when infected with lambda but do not collapse, at MOI 2 cultures enter growth stasis. Responsible for synthesis of msDNA (a branched molecule with RNA linked by a 2',5'-phosphodiester bond to ssDNA). The retron transcript serves as primer (from a conserved internal G residue) and template for the reaction, and codes for the RT. The DNA segment is predicted to be 72 bases long. This chain is Retron Se72 reverse transcriptase, found in Salmonella heidelberg (strain 579083-10).